Consider the following 157-residue polypeptide: Dihydrofolate reductase type 5 (157 aa).

In terms of domain architecture, DHFR spans 2–156; sequence KVSLMAAKAK…INYCYQIWQK (155 aa).

This sequence belongs to the dihydrofolate reductase family. In terms of assembly, homodimer.

The catalysed reaction is (6S)-5,6,7,8-tetrahydrofolate + NADP(+) = 7,8-dihydrofolate + NADPH + H(+). The protein operates within cofactor biosynthesis; tetrahydrofolate biosynthesis; 5,6,7,8-tetrahydrofolate from 7,8-dihydrofolate: step 1/1. Its function is as follows. Key enzyme in folate metabolism. Catalyzes an essential reaction for de novo glycine and purine synthesis, and for DNA precursor synthesis. The polypeptide is Dihydrofolate reductase type 5 (dhfrV) (Escherichia coli).